The sequence spans 1823 residues: MAQQQQQQHQQQQHHQQQQQQLQQQQQLLQYNNNSYNLNYNMEDPERRKRREREKYERQQGIQSDDRETSLFGEPRRLNPNEGDPEITAALGDFVDARDYMNASTVGIYRQAPGASNARLQALPKGFGSATTSFSSSSSASASSSASVPGQLPTSQQQQQQQQQQQQQHYQQQQRAPTYLKQADNKPPYNGRGGYPGQPMKNDIPSSSGMAPPRGPPRSSSSSSSSNNNSSSVSNNATAAPTSASTSSPLGPPMSTQMPNGREKSFLGPPAPALPNGGRFVPPSASGKRPSSTAGLQPPPPENHINKIITEMTNNYRVTPLTSIAATPHAPMRENYNLNGPNKFKYAFDAVDPIGPLNSPPAAGASSLMTPLLAPIAPITSPIAPLLTTPPQASQLPLPLPPMAGATTVPPSMAMGAVAPMQQLTPTPPKASPTPPVIKPLKTEKNHSLEKQDSCLENDLELSESDDERKKDSRSAGNSSNSSESDSSESGSEASSKGDPQQQQQQQQQHLLHQQQQHQQQQLLLQQQQQQRLAATANGSKKKYSQTIIASGANTISGLLTSSGLGGTGAGPGGAVNSTGSAAGGVGSGSGSTGGGSSSSGMGTMSSSNSSNKTPSPTDSNRWHLSRFFPKPANQTAAESVSPGVANAMGNVSMKVPGILPGGAQIIPESIDVTTAIVKNEKLHDDSRHMDDDEDEQADQQHQQQQQRYGVGLSVTVKKEQLEQQQQQQQQQQLLLQQQQLTAEQLALAGALPKNQIKRESRLSDSGSGSSGSGSSSSDSAGGSSEVLPMPGPGETLQIPGVPAAITTVMRVPPATQHKAQPNSVTLTPIGPLPASPKPRQKKPRKKKMSAATAPPLDSSDEDEPANSNKKHALELAATAAAAAANAAAASVMPVAAAAAAAAAPAIKKGRGRPRKQAQQQQQQLQLQQQQQQSGNLSSASASSSQAKGPTLTAAKKPLAKGTASSSSSSGTAATVAAGSRKREHSSNSSSNGNTPTKKPNAAMAAAAAAAAAAAAAAIAVRAASSSDEDSSSSSCSSTKSSNSNSSSSGSDTDIPTAAPAVTTAAAVAAAAAQNPAKKRIVKINKVGVASSKAKRRFSLGNSSNSSSSETEEQQQQFLQQQQQQQQQKQQLQQQQQQQPQQQQLQQHHQLQQQQQQQLLQGHFAPELPLQTLKQSAQQRLSSSDCSSSASSDSSSNSSASSSSDEDDAHRSGKRKSDKKKICTLTRIFNPKEGGAKKQGQVVIIDQSEEQLQQQQQQQQQQQQQQQQQQQQQQQQQQQQAKELKPRATPTQLLGATLASPARTTTPHLTSLMCKIDLSKLARQHHHQPERLKTQQNGHLSSRSAEGARTPKELQQIYAPNGYVGGALGGAAGAAAGNKLLGGVKHEHGVKPEPELDAGYEAKYKPNSVKQEFMLKQELPARRRKRSSSSSSSPYKEKKRKKEKAEQLSKELLPVPVLLPANNHERLSRDKLELLLQQQENSANASPNKLQQQNARQLPLSQSQLQHQHQHQHQLQQQQSQSTATGHAIASTTSATVATASTQLPTTCSEAVQTTPPPAAPPPAPRLIYRSHFDNEEEHASDDHRKNDLLLQEAIRRKRAADSERDSFNQMTLYLEAIVYFLLTADAMERCNMEATWTMYKDTLSLIKYISSKNRPYQQLTNGKHESHNIVAILSLRCQSLISLKLYKLRRANCRATIASCSEFFRSGRGDILNGNTPSSISPSNSVGSQGSGSNTPPGKIVPQDIHNQLCKQNEYLTYVNSAHELWDQADRLVRTGNHIDFIRKLDHENGPLTLHSTMHEVFRYVQAGLKTLRDAVSYPQSQ.

Over residues 1 to 41 (MAQQQQQQHQQQQHHQQQQQQLQQQQQLLQYNNNSYNLNYN) the composition is skewed to low complexity. Disordered stretches follow at residues 1 to 87 (MAQQ…DPEI), 126 to 305 (GFGS…ENHI), 422 to 544 (QQLT…KKKY), 570 to 626 (AGPG…WHLS), 686 to 712 (DSRH…YGVG), 753 to 1057 (PKNQ…DIPT), 1071 to 1287 (AAAQ…LKPR), 1322 to 1350 (ARQH…GART), 1413 to 1448 (FMLK…AEQL), 1480 to 1531 (ENSA…AIAS), 1547 to 1567 (TCSE…APRL), and 1715 to 1744 (GNTP…IVPQ). The span at 53–79 (REKYERQQGIQSDDRETSLFGEPRRLN) shows a compositional bias: basic and acidic residues. Composition is skewed to low complexity over residues 126-147 (GFGS…SSAS), 156-174 (QQQQ…QQQQ), and 205-249 (PSSS…TSSP). Residues 426-438 (PTPPKASPTPPVI) are compositionally biased toward pro residues. The residue at position 434 (Thr-434) is a Phosphothreonine. Over residues 441 to 454 (LKTEKNHSLEKQDS) the composition is skewed to basic and acidic residues. The segment covering 456–466 (LENDLELSESD) has biased composition (acidic residues). Phosphoserine is present on residues Ser-463 and Ser-465. Residues 475 to 531 (SAGNSSNSSESDSSESGSEASSKGDPQQQQQQQQQHLLHQQQQHQQQQLLLQQQQQQ) are compositionally biased toward low complexity. The segment covering 582 to 598 (AAGGVGSGSGSTGGGSS) has biased composition (gly residues). Over residues 599-612 (SSGMGTMSSSNSSN) the composition is skewed to low complexity. The segment covering 764–785 (SDSGSGSSGSGSSSSDSAGGSS) has biased composition (low complexity). Residues 818–827 (HKAQPNSVTL) show a composition bias toward polar residues. The segment covering 839–849 (PRQKKPRKKKM) has biased composition (basic residues). Ser-859 and Ser-860 each carry phosphoserine. 5 stretches are compositionally biased toward low complexity: residues 877 to 906 (AATA…AAPA), 917 to 947 (QAQQ…SSQA), 962 to 979 (GTAS…VAAG), 1002 to 1057 (AAMA…DIPT), and 1102 to 1161 (NSSN…QLLQ). Positions 908-920 (KKGRGRPRKQAQQ) form a DNA-binding region, a.T hook. Ser-939 and Ser-941 each carry phosphoserine. Residues 1172–1181 (TLKQSAQQRL) are compositionally biased toward polar residues. Low complexity-rich tracts occupy residues 1182–1203 (SSSD…ASSS) and 1253–1280 (QQQQ…QQQQ). Polar residues predominate over residues 1334–1344 (TQQNGHLSSRS). A compositionally biased stretch (polar residues) spans 1480 to 1496 (ENSANASPNKLQQQNAR). Ser-1486 carries the post-translational modification Phosphoserine. Over residues 1497–1531 (QLPLSQSQLQHQHQHQHQLQQQQSQSTATGHAIAS) the composition is skewed to low complexity. Over residues 1555–1565 (TPPPAAPPPAP) the composition is skewed to pro residues. A compositionally biased stretch (low complexity) spans 1715-1735 (GNTPSSISPSNSVGSQGSGSN).

Belongs to the AF4 family.

It is found in the nucleus. Has a role in transcriptional regulation. Acts in parallel with the Ras/MAPK and the PI3K/PKB pathways in the control of cell identity and cellular growth. Essential for regulation of the cytoskeleton and cell growth but not for cell proliferation or growth rate. Required specifically for the microtubule-based basal transport of lipid droplets. Plays a partially redundant function downstream of Raf in cell fate specification in the developing eye. Pair-rule protein that regulates embryonic cellularization, gastrulation and segmentation. This is AF4/FMR2 family member lilli from Drosophila virilis (Fruit fly).